The chain runs to 585 residues: Putative phospholipase B-like 2 (585 aa).

Residues 1 to 35 (MAAPMDRTHGGRAARALRRALALASLAGLLLSGLA) form the signal peptide. 3 N-linked (GlcNAc...) asparagine glycosylation sites follow: Asn-84, Asn-102, and Asn-106. The cysteines at positions 138 and 148 are disulfide-linked. Residues Asn-227 and Asn-432 are each glycosylated (N-linked (GlcNAc...) asparagine). Cys-488 and Cys-491 are joined by a disulfide. A glycan (N-linked (GlcNAc...) asparagine) is linked at Asn-511.

It belongs to the phospholipase B-like family. In terms of assembly, interacts with IGF2R. Post-translationally, glycosylated; contains mannose 6-phosphate sugars.

The protein localises to the lysosome lumen. Its function is as follows. Putative phospholipase. This chain is Putative phospholipase B-like 2 (Plbd2), found in Rattus norvegicus (Rat).